Here is a 384-residue protein sequence, read N- to C-terminus: Putative sarcosine oxidase (384 aa).

6 to 36 (DVVVVGAGIFGSCTAYNCQKIGLKTLLLEQF) is an FAD binding site. S-8alpha-FAD cysteine is present on cysteine 315.

This sequence belongs to the MSOX/MTOX family. FAD serves as cofactor.

The enzyme catalyses sarcosine + O2 + H2O = formaldehyde + glycine + H2O2. In Caenorhabditis elegans, this protein is Putative sarcosine oxidase.